The following is a 280-amino-acid chain: Probable ketoamine kinase lp_1983 (280 aa).

87 to 89 (DWL) provides a ligand contact to ATP. Residue Asp189 is the Proton acceptor of the active site.

Belongs to the fructosamine kinase family.

The enzyme catalyses N(6)-(D-ribulosyl)-L-lysine + ATP = N(6)-(3-O-phospho-D-ribulosyl)-L-lysine + ADP + H(+). It catalyses the reaction N-(D-ribulosyl)-cadaverine + ATP = N-(3-O-phospho-D-ribulosyl)-cadaverine + ADP + H(+). The catalysed reaction is N(6)-(D-erythrulosyl)-L-lysine + ATP = N(6)-(3-O-phospho-D-erythrulosyl)-L-lysine + ADP + H(+). It carries out the reaction N-(D-erythrulosyl)-cadaverine + ATP = N-(3-O-phospho-D-erythrulosyl)-cadaverine + ADP + H(+). The enzyme catalyses N(6)-D-ribulosyl-L-lysyl-[protein] + ATP = N(6)-(3-O-phospho-D-ribulosyl)-L-lysyl-[protein] + ADP + H(+). It catalyses the reaction N(6)-(D-erythrulosyl)-L-lysyl-[protein] + ATP = N(6)-(3-O-phospho-D-erythrulosyl)-L-lysyl-[protein] + ADP + H(+). Its function is as follows. Ketoamine kinase that phosphorylates ketoamines, such as erythruloselysine, erythrulosecadaverine, ribuloselysine and ribulosecadaverine, on the third carbon of the sugar moiety to generate ketoamine 3-phosphate. Has higher activity on free lysine (erythruloselysine and ribuloselysine), than on ribuloselysine and erythruloselysine residues on glycated proteins. This chain is Probable ketoamine kinase lp_1983, found in Lactiplantibacillus plantarum (strain ATCC BAA-793 / NCIMB 8826 / WCFS1) (Lactobacillus plantarum).